We begin with the raw amino-acid sequence, 198 residues long: RxLR effector protein Htp1 (198 aa).

An N-terminal signal peptide occupies residues 1–23; it reads MRIHHPLTLAALCVVLHESLGAA. The short motif at 46–49 is the RxLR element; that stretch reads RHLR. Disordered stretches follow at residues 48-101 and 115-198; these read LRSD…TPMK and TKNA…PTFD. N70 carries an N-linked (GlcNAc...) asparagine glycan. Residues 70–91 are compositionally biased toward polar residues; that stretch reads NNSQEQATTGNSVETNQVPSTE. Acidic residues predominate over residues 126–137; it reads DDDDSDFSDDDV. Residues 173–191 are compositionally biased toward low complexity; sequence APTNAPTGTDAPTDAPTDA.

This sequence belongs to the RxLR effector family. In terms of assembly, interacts with the effector Htp3 within the host cells.

Its subcellular location is the secreted. It localises to the host cell. Functionally, effector involved in the disease saprolegniosis in salmonids and other freshwater fish, resulting in considerable economic losses in aquaculture. Within the host fish cells, Htp1 is involved in the uptake of the S.parasitica effector Htp3 at a neutral pH (pH 7.5) and its release from vesicles into host cytosol where it degrades nucleic acids. The polypeptide is RxLR effector protein Htp1 (Saprolegnia parasitica (strain CBS 223.65)).